The primary structure comprises 235 residues: MSARFGVVVFPGSNCDHDAYHAAHDVFDQEARFIWHEEASLGDVDVVIVPGGFSYGDYLRSGAVARFSPIMQDVVRFAEDGGLVFGICNGFQVLCEAGLLPGTLMRNESLRFVCKDTPLRVENAGTPFTNALTEGQVITIPVSHGEGRYYADEDVLARIEANDQVLLRYSTADGAVTDEANPNGSVHGIAGLVNEAGNVCGLMPHPERCVESLLGGDDGRLIFESLLNHVSIVAA.

Residues Phe-5 to Ala-235 form the Glutamine amidotransferase type-1 domain. The active-site Nucleophile is Cys-88. Active-site residues include His-205 and Glu-207.

As to quaternary structure, part of the FGAM synthase complex composed of 1 PurL, 1 PurQ and 2 PurS subunits.

Its subcellular location is the cytoplasm. It catalyses the reaction N(2)-formyl-N(1)-(5-phospho-beta-D-ribosyl)glycinamide + L-glutamine + ATP + H2O = 2-formamido-N(1)-(5-O-phospho-beta-D-ribosyl)acetamidine + L-glutamate + ADP + phosphate + H(+). The catalysed reaction is L-glutamine + H2O = L-glutamate + NH4(+). It functions in the pathway purine metabolism; IMP biosynthesis via de novo pathway; 5-amino-1-(5-phospho-D-ribosyl)imidazole from N(2)-formyl-N(1)-(5-phospho-D-ribosyl)glycinamide: step 1/2. Its function is as follows. Part of the phosphoribosylformylglycinamidine synthase complex involved in the purines biosynthetic pathway. Catalyzes the ATP-dependent conversion of formylglycinamide ribonucleotide (FGAR) and glutamine to yield formylglycinamidine ribonucleotide (FGAM) and glutamate. The FGAM synthase complex is composed of three subunits. PurQ produces an ammonia molecule by converting glutamine to glutamate. PurL transfers the ammonia molecule to FGAR to form FGAM in an ATP-dependent manner. PurS interacts with PurQ and PurL and is thought to assist in the transfer of the ammonia molecule from PurQ to PurL. This chain is Phosphoribosylformylglycinamidine synthase subunit PurQ, found in Salinibacter ruber (strain DSM 13855 / M31).